A 353-amino-acid polypeptide reads, in one-letter code: Chorismate synthase (353 aa).

Residue arginine 48 coordinates NADP(+). FMN contacts are provided by residues 125-127 (RSS), 238-239 (NA), glycine 278, 293-297 (KPTSS), and arginine 319.

This sequence belongs to the chorismate synthase family. Homotetramer. FMNH2 serves as cofactor.

The catalysed reaction is 5-O-(1-carboxyvinyl)-3-phosphoshikimate = chorismate + phosphate. Its pathway is metabolic intermediate biosynthesis; chorismate biosynthesis; chorismate from D-erythrose 4-phosphate and phosphoenolpyruvate: step 7/7. Functionally, catalyzes the anti-1,4-elimination of the C-3 phosphate and the C-6 proR hydrogen from 5-enolpyruvylshikimate-3-phosphate (EPSP) to yield chorismate, which is the branch point compound that serves as the starting substrate for the three terminal pathways of aromatic amino acid biosynthesis. This reaction introduces a second double bond into the aromatic ring system. The protein is Chorismate synthase of Buchnera aphidicola subsp. Cinara cedri (strain Cc).